The primary structure comprises 119 residues: Large ribosomal subunit protein uL18 (119 aa).

It belongs to the universal ribosomal protein uL18 family. As to quaternary structure, part of the 50S ribosomal subunit; part of the 5S rRNA/L5/L18/L25 subcomplex. Contacts the 5S and 23S rRNAs.

In terms of biological role, this is one of the proteins that bind and probably mediate the attachment of the 5S RNA into the large ribosomal subunit, where it forms part of the central protuberance. In Borrelia duttonii (strain Ly), this protein is Large ribosomal subunit protein uL18.